A 264-amino-acid chain; its full sequence is uncharacterized protein (264 aa).

The first 22 residues, Met1 to Gly22, serve as a signal peptide directing secretion. Residue Cys23 is the site of N-palmitoyl cysteine attachment. A lipid anchor (S-diacylglycerol cysteine) is attached at Cys23.

It belongs to the staphylococcal tandem lipoprotein family.

Its subcellular location is the cell membrane. This is an uncharacterized protein from Staphylococcus aureus (strain N315).